Consider the following 320-residue polypeptide: UDP-N-acetylenolpyruvoylglucosamine reductase (320 aa).

Residues 34-200 (RAGGLAEVFF…TSAVFEGFAE (167 aa)) enclose the FAD-binding PCMH-type domain. Arg-180 is an active-site residue. Ser-229 functions as the Proton donor in the catalytic mechanism. Glu-299 is a catalytic residue.

Belongs to the MurB family. It depends on FAD as a cofactor.

It is found in the cytoplasm. The catalysed reaction is UDP-N-acetyl-alpha-D-muramate + NADP(+) = UDP-N-acetyl-3-O-(1-carboxyvinyl)-alpha-D-glucosamine + NADPH + H(+). The protein operates within cell wall biogenesis; peptidoglycan biosynthesis. Its function is as follows. Cell wall formation. The protein is UDP-N-acetylenolpyruvoylglucosamine reductase of Mesorhizobium japonicum (strain LMG 29417 / CECT 9101 / MAFF 303099) (Mesorhizobium loti (strain MAFF 303099)).